Here is a 193-residue protein sequence, read N- to C-terminus: Surfactant protein C (193 aa).

A propeptide spanning residues 1-23 (MDMSSKEVLMESPPDYSAGPRSQ) is cleaved from the precursor. S-palmitoyl cysteine attachment occurs at residues Cys-28 and Cys-29. Residues 59 to 193 (HMSQKHTEMV…LCGELPLYYI (135 aa)) constitute a propeptide that is removed on maturation. In terms of domain architecture, BRICHOS spans 94–193 (FSIGSTGIVV…LCGELPLYYI (100 aa)). Cys-121 and Cys-185 form a disulfide bridge. A disordered region spans residues 147–170 (KPSTPTSKLGQEEGHDTGSESDSS).

The protein resides in the secreted. The protein localises to the extracellular space. Its subcellular location is the surface film. Pulmonary surfactant associated proteins promote alveolar stability by lowering the surface tension at the air-liquid interface in the peripheral air spaces. The chain is Surfactant protein C from Mus musculus (Mouse).